The primary structure comprises 653 residues: Cytidine monophosphate-N-acetylneuraminic acid hydroxylase (653 aa).

The region spanning 11–120 (LSPEETSELK…PEYNEDGSLD (110 aa)) is the Rieske domain. [2Fe-2S] cluster contacts are provided by cysteine 62, histidine 64, cysteine 83, and histidine 86. The segment at 596–622 (WNPSQATPAVEAKDPSSDSKDSATKPG) is disordered. Over residues 606–618 (EAKDPSSDSKDSA) the composition is skewed to basic and acidic residues. A helical transmembrane segment spans residues 630-647 (LLRPLGIVVALVGVGVAI).

This sequence belongs to the CMP-Neu5Ac hydroxylase family. [2Fe-2S] cluster is required as a cofactor.

It localises to the membrane. The catalysed reaction is CMP-N-acetyl-beta-neuraminate + 2 Fe(II)-[cytochrome b5] + O2 + 2 H(+) = CMP-N-glycoloyl-beta-neuraminate + 2 Fe(III)-[cytochrome b5] + H2O. Its pathway is amino-sugar metabolism; N-acetylneuraminate metabolism. Its function is as follows. Sialic acids are components of carbohydrate chains of glycoconjugates and are involved in cell-cell recognition and cell-pathogen interactions. Catalyzes the conversion of CMP-N-acetylneuraminic acid (CMP-Neu5Ac) into its hydroxylated derivative CMP-N-glycolylneuraminic acid (CMP-Neu5Gc), a sialic acid abundantly expressed at the surface of many cells. This chain is Cytidine monophosphate-N-acetylneuraminic acid hydroxylase (cnh), found in Asterias rubens (Common European starfish).